The sequence spans 168 residues: Ribosome maturation factor RimM (168 aa).

In terms of domain architecture, PRC barrel spans 96–168; that stretch reads VDEYYWGDLI…TIRVDWQKDW (73 aa).

Belongs to the RimM family. As to quaternary structure, binds ribosomal protein uS19.

It localises to the cytoplasm. Its function is as follows. An accessory protein needed during the final step in the assembly of 30S ribosomal subunit, possibly for assembly of the head region. Essential for efficient processing of 16S rRNA. May be needed both before and after RbfA during the maturation of 16S rRNA. It has affinity for free ribosomal 30S subunits but not for 70S ribosomes. This is Ribosome maturation factor RimM from Aromatoleum aromaticum (strain DSM 19018 / LMG 30748 / EbN1) (Azoarcus sp. (strain EbN1)).